The chain runs to 249 residues: Glutathione S-transferase tcpG (249 aa).

The GST N-terminal domain occupies 20-109; it reads LYVRKAIPAP…YLCDKHDKDG (90 aa). The GST C-terminal domain occupies 115–249; the sequence is NATERAQVTS…TEEEIELHGR (135 aa).

Belongs to the GST superfamily.

The catalysed reaction is RX + glutathione = an S-substituted glutathione + a halide anion + H(+). It functions in the pathway secondary metabolite biosynthesis. Functionally, glutathione S-transferase; part of the gene cluster that mediates the biosynthesis of an unusual class of epipolythiodioxopiperazines (ETPs) lacking the reactive thiol group important for toxicity. Firstly, L-tyrosine is prenylated by tcpD, before undergoing condensation with L-glycine in a reaction catalyzed by the NRPS tcpP leading to the diketopiperazine (DKP) backbone. Afterwards the alpha-carbon of tyrosine is oxidized by the cytochrome P450 tcpC to form a hydroxyl group. However, in contrast other ETP biosynthesis pathways studied so far, tcpC is not able to bishydroxylate the DKP at both alpha-carbon positions, but hydroxylates the alpha-carbon of the tyrosine part and the nitrogen of the glycine part. The next steps involve an alpha,beta-elimination reaction catalyzed by tcpI, a methylation by the methyltransferase tcpN the action of the four enzyme cascade tcpG/K/J/I. Due to a dysfunctional cytochrome P450 monooxygenase tcpC, the pathway leads to the biosynthesis of probable non-toxic metabolites lacking the reactive thiol group. The chain is Glutathione S-transferase tcpG from Claviceps purpurea (strain 20.1) (Ergot fungus).